Here is a 589-residue protein sequence, read N- to C-terminus: Probable translation initiation factor IF-2 (589 aa).

Residues 3–224 (VRSPFVVVMG…AGVSQRFIPR (222 aa)) form the tr-type G domain. The G1 stretch occupies residues 12 to 19 (GHVDVGKT). 12–19 (GHVDVGKT) serves as a coordination point for GTP. The segment at 37-41 (MITQH) is G2. Positions 78 to 81 (DTPG) are G3. GTP contacts are provided by residues 78-82 (DTPGH) and 132-135 (NKLD). Positions 132–135 (NKLD) are G4. Positions 200–202 (SAV) are G5.

It belongs to the TRAFAC class translation factor GTPase superfamily. Classic translation factor GTPase family. IF-2 subfamily.

In terms of biological role, function in general translation initiation by promoting the binding of the formylmethionine-tRNA to ribosomes. Seems to function along with eIF-2. The sequence is that of Probable translation initiation factor IF-2 from Pyrobaculum neutrophilum (strain DSM 2338 / JCM 9278 / NBRC 100436 / V24Sta) (Thermoproteus neutrophilus).